A 473-amino-acid polypeptide reads, in one-letter code: H(+)/Cl(-) exchange transporter ClcA (473 aa).

At 1–32 (MKTDTSTFLAQQIVRLRRRDQIRRLMQRDKTP) the chain is on the cytoplasmic side. A helical transmembrane segment spans residues 33–69 (LAILFMAAVVGTLTGLVGVAFEKTVSWVQNMRIGALV). Over 70-76 (QVADHAF) the chain is Periplasmic. A helical membrane pass occupies residues 77–100 (LLWPLAFILSALLAMVGYFLVRKF). The Selectivity filter part_1 motif lies at 106 to 110 (GSGIP). Ser-107 is a binding site for chloride. Positions 109–116 (IPEIEGAL) form an intramembrane region, helical. Residues 117–123 (EELRPVR) are Cytoplasmic-facing. The next 2 helical transmembrane spans lie at 124-141 (WWRV…TLGA) and 148-166 (EGPT…LDVF). Positions 146–150 (GREGP) match the Selectivity filter part_2 motif. Residues 167-176 (RMRSAEARHT) lie on the Cytoplasmic side of the membrane. Intramembrane regions (helical) lie at residues 177 to 189 (LLAT…LSAA) and 193 to 201 (PLAGILFII). Residues 202–214 (EEMRPQFRYNLIS) lie on the Cytoplasmic side of the membrane. Residues 215-232 (IKAVFTGVIMSSIVFRIF) form a helical membrane-spanning segment. At 233 to 252 (NGEAPIIEVGKLSDAPVNTL) the chain is on the periplasmic side. The chain crosses the membrane as a helical span at residues 253–281 (WLYLILGIIFGCVGPVFNSLVLRTQDMFQ). Over 282-287 (RFHGGE) the chain is Cytoplasmic. A helical transmembrane segment spans residues 288–309 (IKKWVLMGGAIGGLCGILGLIE). Residues 310–329 (PAAAGGGFNLIPIAAAGNFS) are Periplasmic-facing. Transmembrane regions (helical) follow at residues 330-349 (VGLL…LCFS) and 355-376 (GIFA…MAAA). A Selectivity filter part_3 motif is present at residues 355-359 (GIFAP). Ile-356 and Phe-357 together coordinate chloride. Over 377–386 (VLFPQYHLEA) the chain is Periplasmic. The segment at residues 387–401 (GTFAIAGMGALMAAS) is an intramembrane region (helical). Positions 402–404 (VRA) form an intramembrane region, note=Loop between two helices. Positions 405-416 (PLTGIVLVLEMT) form an intramembrane region, helical. Residues 417-421 (DNYQL) constitute an intramembrane region (note=Loop between two helices). Residues 422-438 (ILPMIITCLGATLLAQF) form a helical membrane-spanning segment. Residues 439 to 473 (LGGKPLYSTILARTLAKQDAEQAAKNQNAPAGENT) lie on the Cytoplasmic side of the membrane. Tyr-445 is a chloride binding site.

The protein belongs to the chloride channel (TC 2.A.49) family. ClcA subfamily. In terms of assembly, homodimer.

The protein resides in the cell inner membrane. It catalyses the reaction 2 chloride(in) + H(+)(out) = 2 chloride(out) + H(+)(in). In terms of biological role, proton-coupled chloride transporter. Functions as antiport system and exchanges two chloride ions for 1 proton. Probably acts as an electrical shunt for an outwardly-directed proton pump that is linked to amino acid decarboxylation, as part of the extreme acid resistance (XAR) response. This Salmonella typhi protein is H(+)/Cl(-) exchange transporter ClcA.